The sequence spans 232 residues: Orotate phosphoribosyltransferase (232 aa).

5-phospho-alpha-D-ribose 1-diphosphate contacts are provided by residues R107, K108, K111, and 133–141 (EDLTTDGGS). T137 provides a ligand contact to orotate.

It belongs to the purine/pyrimidine phosphoribosyltransferase family. PyrE subfamily. In terms of assembly, homodimer. The cofactor is Mg(2+).

The enzyme catalyses orotidine 5'-phosphate + diphosphate = orotate + 5-phospho-alpha-D-ribose 1-diphosphate. It participates in pyrimidine metabolism; UMP biosynthesis via de novo pathway; UMP from orotate: step 1/2. Catalyzes the transfer of a ribosyl phosphate group from 5-phosphoribose 1-diphosphate to orotate, leading to the formation of orotidine monophosphate (OMP). The polypeptide is Orotate phosphoribosyltransferase (Cereibacter sphaeroides (strain ATCC 17029 / ATH 2.4.9) (Rhodobacter sphaeroides)).